Here is a 119-residue protein sequence, read N- to C-terminus: uncharacterized protein (119 aa).

The tract at residues Met-1 to Cys-22 is disordered.

This is an uncharacterized protein from Saccharomyces cerevisiae (strain ATCC 204508 / S288c) (Baker's yeast).